We begin with the raw amino-acid sequence, 130 residues long: 3-aminoacrylate deaminase RutC (130 aa).

The protein belongs to the RutC family.

It catalyses the reaction (Z)-3-aminoacrylate + H2O + H(+) = 3-oxopropanoate + NH4(+). Involved in pyrimidine catabolism. Catalyzes the deamination of 3-aminoacrylate to malonic semialdehyde, a reaction that can also occur spontaneously. RutC may facilitate the reaction and modulate the metabolic fitness, rather than catalyzing essential functions. The sequence is that of 3-aminoacrylate deaminase RutC from Variovorax paradoxus (strain S110).